The chain runs to 288 residues: Acetyl-coenzyme A carboxylase carboxyl transferase subunit beta, chloroplastic (288 aa).

One can recognise a CoA carboxyltransferase N-terminal domain in the interval 30–288 (LWIKCFDCGL…QILSLHNHSK (259 aa)). Cys34, Cys37, Cys53, and Cys56 together coordinate Zn(2+). The C4-type zinc-finger motif lies at 34-56 (CFDCGLLMYSKVLKRNLKVCPQC).

Belongs to the AccD/PCCB family. In terms of assembly, acetyl-CoA carboxylase is a heterohexamer composed of biotin carboxyl carrier protein, biotin carboxylase and 2 subunits each of ACCase subunit alpha and ACCase plastid-coded subunit beta (accD). The cofactor is Zn(2+).

The protein localises to the plastid. It localises to the chloroplast stroma. The enzyme catalyses N(6)-carboxybiotinyl-L-lysyl-[protein] + acetyl-CoA = N(6)-biotinyl-L-lysyl-[protein] + malonyl-CoA. It participates in lipid metabolism; malonyl-CoA biosynthesis; malonyl-CoA from acetyl-CoA: step 1/1. Functionally, component of the acetyl coenzyme A carboxylase (ACC) complex. Biotin carboxylase (BC) catalyzes the carboxylation of biotin on its carrier protein (BCCP) and then the CO(2) group is transferred by the transcarboxylase to acetyl-CoA to form malonyl-CoA. The polypeptide is Acetyl-coenzyme A carboxylase carboxyl transferase subunit beta, chloroplastic (Pyropia yezoensis (Susabi-nori)).